Reading from the N-terminus, the 1519-residue chain is Putative lipoprotein YghJ (1519 aa).

The signal sequence occupies residues 1-23 (MNKKFKYKKSLLAAILSATLLAG). Disordered stretches follow at residues 22 to 107 (AGCD…GATC) and 226 to 247 (NAAT…TTPG). Cys-24 carries N-palmitoyl cysteine lipidation. Residue Cys-24 is the site of S-diacylglycerol cysteine attachment. Residues 31 to 42 (SSSDTPPVDSGT) show a composition bias toward low complexity. The span at 51–77 (DPTPNPEPTPEPTPDPEPTPEPIPDPE) shows a compositional bias: pro residues. The span at 97–107 (GGSQRVTGATC) shows a compositional bias: polar residues. Residues 234–247 (STHTSPVVPVTTPG) are compositionally biased toward low complexity. A Peptidase M60 domain is found at 1080–1380 (GNMQSTGLWA…MYAQLKEWAE (301 aa)). A disordered region spans residues 1497–1519 (DLPKPEQGPETINQVTEHKMSAE).

It to V.cholerae AcfD (VC_0845).

The protein localises to the cell membrane. May be a substrate of the type II secretion system beta (T2SS-beta). The polypeptide is Putative lipoprotein YghJ (yghJ) (Escherichia coli O78:H11 (strain H10407 / ETEC)).